The chain runs to 407 residues: uncharacterized protein (407 aa).

This sequence belongs to the peptidase U32 family.

This is an uncharacterized protein from Methanocaldococcus jannaschii (strain ATCC 43067 / DSM 2661 / JAL-1 / JCM 10045 / NBRC 100440) (Methanococcus jannaschii).